The chain runs to 604 residues: Proline--tRNA ligase (604 aa).

This sequence belongs to the class-II aminoacyl-tRNA synthetase family. ProS type 1 subfamily. As to quaternary structure, homodimer.

The protein localises to the cytoplasm. The catalysed reaction is tRNA(Pro) + L-proline + ATP = L-prolyl-tRNA(Pro) + AMP + diphosphate. Catalyzes the attachment of proline to tRNA(Pro) in a two-step reaction: proline is first activated by ATP to form Pro-AMP and then transferred to the acceptor end of tRNA(Pro). As ProRS can inadvertently accommodate and process non-cognate amino acids such as alanine and cysteine, to avoid such errors it has two additional distinct editing activities against alanine. One activity is designated as 'pretransfer' editing and involves the tRNA(Pro)-independent hydrolysis of activated Ala-AMP. The other activity is designated 'posttransfer' editing and involves deacylation of mischarged Ala-tRNA(Pro). The misacylated Cys-tRNA(Pro) is not edited by ProRS. The polypeptide is Proline--tRNA ligase (Nostoc punctiforme (strain ATCC 29133 / PCC 73102)).